The sequence spans 550 residues: Zorya protein ZorA (550 aa).

A run of 3 helical transmembrane segments spans residues Thr-16–Cys-36, Leu-52–Phe-72, and Phe-92–Phe-112.

It belongs to the MotA family.

It localises to the cell inner membrane. In terms of biological role, component of antiviral defense system Zorya type II, composed of ZorA, ZorB and ZorE. Expression of Zorya type II in E.coli (strain MG1655) confers resistance to phages SECphi7 and T7. While most T7 infected Zorya-containing cells undergo abortive infection, a minority produce viable phage progeny. These eventually accumulate to a high multiplicity of infection, leading to culture collapse by 170 minutes after initial infection. ZorA and ZorB probably assemble in the cell inner membrane and exert their effect there. This Escherichia coli (strain ATCC 8739 / DSM 1576 / NBRC 3972 / NCIMB 8545 / WDCM 00012 / Crooks) protein is Zorya protein ZorA.